The chain runs to 427 residues: Glutamate-1-semialdehyde 2,1-aminomutase (427 aa).

The residue at position 266 (lysine 266) is an N6-(pyridoxal phosphate)lysine.

This sequence belongs to the class-III pyridoxal-phosphate-dependent aminotransferase family. HemL subfamily. Homodimer. Requires pyridoxal 5'-phosphate as cofactor.

Its subcellular location is the cytoplasm. It catalyses the reaction (S)-4-amino-5-oxopentanoate = 5-aminolevulinate. It functions in the pathway porphyrin-containing compound metabolism; protoporphyrin-IX biosynthesis; 5-aminolevulinate from L-glutamyl-tRNA(Glu): step 2/2. The polypeptide is Glutamate-1-semialdehyde 2,1-aminomutase (Dechloromonas aromatica (strain RCB)).